A 485-amino-acid polypeptide reads, in one-letter code: Adenosylhomocysteinase (485 aa).

Substrate-binding residues include Thr64, Asp139, and Glu205. Thr206–Thr208 lines the NAD(+) pocket. Substrate is bound by residues Lys235 and Asp239. Residues Asn240, Gly269–Gly274, Glu292, Asn327, Ile348–His350, and Asn397 contribute to the NAD(+) site.

The protein belongs to the adenosylhomocysteinase family. In terms of assembly, homotetramer. It depends on NAD(+) as a cofactor.

The catalysed reaction is S-adenosyl-L-homocysteine + H2O = L-homocysteine + adenosine. It functions in the pathway amino-acid biosynthesis; L-homocysteine biosynthesis; L-homocysteine from S-adenosyl-L-homocysteine: step 1/1. Its function is as follows. Adenosylhomocysteine is a competitive inhibitor of S-adenosyl-L-methionine-dependent methyl transferase reactions; therefore adenosylhomocysteinase may play a key role in the control of methylations via regulation of the intracellular concentration of adenosylhomocysteine. The polypeptide is Adenosylhomocysteinase (SAHH) (Catharanthus roseus (Madagascar periwinkle)).